A 716-amino-acid polypeptide reads, in one-letter code: Calpain-1 catalytic subunit (716 aa).

In terms of domain architecture, Calpain catalytic spans 55-354 (LFRDEAFPPV…FTRLEICNLT (300 aa)). 2 residues coordinate Ca(2+): Gln-109 and Asp-114. Residues Cys-115, His-272, and Asn-296 contribute to the active site. 2 residues coordinate Ca(2+): Asp-318 and Glu-323. Thr-354 carries the post-translational modification Phosphothreonine. The interval 355-528 (PDALKSQRFR…KSAGTQELDD (174 aa)) is domain III. Residues 529–544 (QVQANLPDEQVLSEEE) form a linker region. EF-hand domains are found at residues 543 to 578 (EEID…IISK), 587 to 620 (FSLE…NRIR), 617 to 652 (NRIR…AGFK), and 682 to 716 (VRLE…TMFA). The segment at 545 to 715 (IDENFKSLFR…LFKWLQLTMF (171 aa)) is domain IV. Positions 600, 602, 604, 606, 611, 630, 632, 634, 636, and 641 each coordinate Ca(2+).

The protein belongs to the peptidase C2 family. Forms a heterodimer with a small (regulatory) subunit CAPNS1. The cofactor is Ca(2+). Undergoes calcium-induced successive autoproteolytic cleavages that generate a membrane-bound 78 kDa active form and an intracellular 75 kDa active form. Calpastatin reduces with high efficiency the transition from 78 kDa to 75 kDa calpain forms.

It localises to the cytoplasm. It is found in the cell membrane. It carries out the reaction Broad endopeptidase specificity.. Its activity is regulated as follows. Activated by micromolar concentrations of calcium and inhibited by calpastatin. Functionally, calcium-regulated non-lysosomal thiol-protease which catalyzes limited proteolysis of substrates involved in cytoskeletal remodeling and signal transduction. Proteolytically cleaves CTBP1. Cleaves and activates caspase-7 (CASP7). The sequence is that of Calpain-1 catalytic subunit from Bos taurus (Bovine).